The chain runs to 525 residues: Light-independent protochlorophyllide reductase subunit B (525 aa).

Asp36 contacts [4Fe-4S] cluster. Asp292 acts as the Proton donor in catalysis. 428–429 contacts substrate; that stretch reads GL. Positions 447–470 are disordered; that stretch reads PSASSENGSAPLSAGTATPAAAPE. Residues 460–470 are compositionally biased toward low complexity; the sequence is AGTATPAAAPE.

The protein belongs to the ChlB/BchB/BchZ family. As to quaternary structure, protochlorophyllide reductase is composed of three subunits; BchL, BchN and BchB. Forms a heterotetramer of two BchB and two BchN subunits. The cofactor is [4Fe-4S] cluster.

It carries out the reaction chlorophyllide a + oxidized 2[4Fe-4S]-[ferredoxin] + 2 ADP + 2 phosphate = protochlorophyllide a + reduced 2[4Fe-4S]-[ferredoxin] + 2 ATP + 2 H2O. It participates in porphyrin-containing compound metabolism; bacteriochlorophyll biosynthesis (light-independent). Its function is as follows. Component of the dark-operative protochlorophyllide reductase (DPOR) that uses Mg-ATP and reduced ferredoxin to reduce ring D of protochlorophyllide (Pchlide) to form chlorophyllide a (Chlide). This reaction is light-independent. The NB-protein (BchN-BchB) is the catalytic component of the complex. In Chlorobium luteolum (strain DSM 273 / BCRC 81028 / 2530) (Pelodictyon luteolum), this protein is Light-independent protochlorophyllide reductase subunit B.